The chain runs to 829 residues: DNA ligase (829 aa).

The interval 1–23 is disordered; the sequence is MPAQTSRARPVEEMTAAQAREAH. Residues 47-51, 96-97, and Glu-130 each bind NAD(+); these read DAEYD and SL. The N6-AMP-lysine intermediate role is filled by Lys-132. Residues Arg-153, Glu-190, Lys-306, and Lys-330 each contribute to the NAD(+) site. Positions 453, 456, 477, and 483 each coordinate Zn(2+). One can recognise a BRCT domain in the interval 750–829; sequence AAAAVFSGQT…AEWLAMVEAA (80 aa).

The protein belongs to the NAD-dependent DNA ligase family. LigA subfamily. It depends on Mg(2+) as a cofactor. Mn(2+) serves as cofactor.

The catalysed reaction is NAD(+) + (deoxyribonucleotide)n-3'-hydroxyl + 5'-phospho-(deoxyribonucleotide)m = (deoxyribonucleotide)n+m + AMP + beta-nicotinamide D-nucleotide.. In terms of biological role, DNA ligase that catalyzes the formation of phosphodiester linkages between 5'-phosphoryl and 3'-hydroxyl groups in double-stranded DNA using NAD as a coenzyme and as the energy source for the reaction. It is essential for DNA replication and repair of damaged DNA. This Methylobacterium nodulans (strain LMG 21967 / CNCM I-2342 / ORS 2060) protein is DNA ligase.